A 602-amino-acid polypeptide reads, in one-letter code: MNSWFLQVSKRLGPAGRRLWLLGFMGVVLAVTLGLALRAARESATQRTATYTELLQIAQAGQATAVEVSGDRFLVRQAGGAVVTAVVDEPTLRQELVSRFAGAGASVDFASREDPSRAASAVLPVVVLAAVGFALFTVSRRRSPKVFSDVKAGAARAAVRFADVAGMHEVKQELAETVEFLKSPDRFARLGGRPPRGVLLTGEPGTGKTLLARAVACEAGVRFLSASGSSFQEMFVGVGASRVRALFAEARKSAPCIVFIDEIDAVGRARAKGHGDSASAEHDQTLNQLLVEMDGFDHETGIVVIASTNRADMLDPALLRPGRFDRKVTVPLPDVRGREEILNVHAGPIPLQGEVDLSYIARGTPGFSGADLANLLNEAAILAAREGADAVDPTHIDRARDRVLMGLERKGVLVDEDERYATAVHEAGHVAVGLLAPSCDPVHKVSILPRGRALGVTQALPEKDRLMYRKEYLEDQICMLMGGRAAEMVVLGTMTAGASDDIQRASTIAWKMVAELGMSHLGPICVGDGHPSRSPALLDRVDETARALTEAQLSRAIEIVRSRRGEIEALVKALLEKETLGMDEIQACFPADRRPRPEDQAA.

The Cytoplasmic segment spans residues 1 to 18 (MNSWFLQVSKRLGPAGRR). Residues 19 to 39 (LWLLGFMGVVLAVTLGLALRA) traverse the membrane as a helical segment. The Periplasmic segment spans residues 40 to 117 (ARESATQRTA…DFASREDPSR (78 aa)). The helical transmembrane segment at 118–138 (AASAVLPVVVLAAVGFALFTV) threads the bilayer. The Cytoplasmic portion of the chain corresponds to 139-602 (SRRRSPKVFS…RRPRPEDQAA (464 aa)). Residue 202–209 (GEPGTGKT) coordinates ATP. Position 425 (histidine 425) interacts with Zn(2+). Glutamate 426 is a catalytic residue. Histidine 429 and aspartate 501 together coordinate Zn(2+).

In the central section; belongs to the AAA ATPase family. This sequence in the C-terminal section; belongs to the peptidase M41 family. In terms of assembly, homohexamer. The cofactor is Zn(2+).

The protein resides in the cell inner membrane. Its function is as follows. Acts as a processive, ATP-dependent zinc metallopeptidase for both cytoplasmic and membrane proteins. Plays a role in the quality control of integral membrane proteins. The sequence is that of ATP-dependent zinc metalloprotease FtsH 3 from Sorangium cellulosum (strain So ce56) (Polyangium cellulosum (strain So ce56)).